The chain runs to 478 residues: Membrane-bound lytic murein transglycosylase F (478 aa).

The N-terminal stretch at 1–22 (MTRFLFAIILGLLLTACQQETV) is a signal peptide. The interval 23–257 (EETEFVPHKL…HLNEKYFGHV (235 aa)) is non-LT domain. The LT domain stretch occupies residues 258-478 (KRFDYIDTRA…PGTLSPDKPK (221 aa)). Glutamate 302 is an active-site residue. The tract at residues 447–478 (KQQNSEEVAPSDLTAEETPVPAPGTLSPDKPK) is disordered.

It in the N-terminal section; belongs to the bacterial solute-binding protein 3 family. In the C-terminal section; belongs to the transglycosylase Slt family.

The protein resides in the cell outer membrane. The enzyme catalyses Exolytic cleavage of the (1-&gt;4)-beta-glycosidic linkage between N-acetylmuramic acid (MurNAc) and N-acetylglucosamine (GlcNAc) residues in peptidoglycan, from either the reducing or the non-reducing ends of the peptidoglycan chains, with concomitant formation of a 1,6-anhydrobond in the MurNAc residue.. In terms of biological role, murein-degrading enzyme that degrades murein glycan strands and insoluble, high-molecular weight murein sacculi, with the concomitant formation of a 1,6-anhydromuramoyl product. Lytic transglycosylases (LTs) play an integral role in the metabolism of the peptidoglycan (PG) sacculus. Their lytic action creates space within the PG sacculus to allow for its expansion as well as for the insertion of various structures such as secretion systems and flagella. The sequence is that of Membrane-bound lytic murein transglycosylase F from Shewanella oneidensis (strain ATCC 700550 / JCM 31522 / CIP 106686 / LMG 19005 / NCIMB 14063 / MR-1).